Here is a 212-residue protein sequence, read N- to C-terminus: Large ribosomal subunit protein uL3 (212 aa).

Position 153 is an N5-methylglutamine (Gln-153).

This sequence belongs to the universal ribosomal protein uL3 family. In terms of assembly, part of the 50S ribosomal subunit. Forms a cluster with proteins L14 and L19. Post-translationally, methylated by PrmB.

In terms of biological role, one of the primary rRNA binding proteins, it binds directly near the 3'-end of the 23S rRNA, where it nucleates assembly of the 50S subunit. The protein is Large ribosomal subunit protein uL3 of Shewanella loihica (strain ATCC BAA-1088 / PV-4).